The following is a 98-amino-acid chain: UPF0251 protein Sputcn32_0687 (98 aa).

This sequence belongs to the UPF0251 family.

The sequence is that of UPF0251 protein Sputcn32_0687 from Shewanella putrefaciens (strain CN-32 / ATCC BAA-453).